Consider the following 1015-residue polypeptide: Tolloid-like protein 2 (1015 aa).

Positions 1–25 (MPRATALGALVSLLLLLPLPRGAGG) are cleaved as a signal peptide. 2 disordered regions span residues 24-49 (GGLGERPDATADYSELDGEEGTEQQL) and 88-130 (VGAT…TTLL). A propeptide spanning residues 26–149 (LGERPDATAD…AKTFSPRVRR (124 aa)) is cleaved from the precursor. Residues 103–113 (SESSPDTTAMD) show a composition bias toward polar residues. A compositionally biased stretch (basic and acidic residues) spans 115–125 (GTKEAGKDGRE). The region spanning 149–349 (RATTSRTERI…AQARKLYKCP (201 aa)) is the Peptidase M12A domain. Asn-171 carries N-linked (GlcNAc...) asparagine glycosylation. Intrachain disulfides connect Cys-192–Cys-348, Cys-212–Cys-234, Cys-214–Cys-215, and Cys-351–Cys-377. His-242 is a Zn(2+) binding site. Glu-243 is an active-site residue. Zn(2+) is bound by residues His-246 and His-252. 2 consecutive CUB domains span residues 351–463 (CGET…YEAT) and 464–576 (CGGD…FFKE). Asn-361 and Asn-392 each carry an N-linked (GlcNAc...) asparagine glycan. 12 disulfide bridges follow: Cys-404–Cys-426, Cys-464–Cys-490, Cys-517–Cys-539, Cys-580–Cys-592, Cys-588–Cys-601, Cys-603–Cys-616, Cys-620–Cys-646, Cys-673–Cys-695, Cys-736–Cys-747, Cys-743–Cys-756, Cys-758–Cys-771, and Cys-776–Cys-802. One can recognise an EGF-like 1; calcium-binding domain in the interval 576 to 617 (EVDECSWPDHGGCEHRCVNTLGSYKCACDPGYELAADKKMCE). The 113-residue stretch at 620–732 (CGGFITKLNG…RGFRAHFFSD (113 aa)) folds into the CUB 3 domain. Asn-628 is a glycosylation site (N-linked (GlcNAc...) asparagine). The EGF-like 2; calcium-binding domain occupies 732–772 (DKDECAKDNGGCQHECVNTFGSYLCRCRNGYWLHENGHDCK). CUB domains lie at 776-888 (CAHK…HSTE) and 889-1005 (CGGR…YTST). Asn-805 carries N-linked (GlcNAc...) asparagine glycosylation. Intrachain disulfides connect Cys-829–Cys-851, Cys-889–Cys-919, and Cys-946–Cys-968. Residues Arg-963 and Arg-966 each carry the omega-N-methylarginine modification.

The cofactor is Zn(2+).

It localises to the secreted. Functionally, protease which specifically processes pro-lysyl oxidase. Required for the embryonic development. Predominant protease, which in the development, influences dorsal-ventral patterning and skeletogenesis. The sequence is that of Tolloid-like protein 2 (TLL2) from Homo sapiens (Human).